A 184-amino-acid polypeptide reads, in one-letter code: 20.9 kDa protein (184 aa).

This Zymomonas mobilis subsp. mobilis (strain ATCC 10988 / DSM 424 / LMG 404 / NCIMB 8938 / NRRL B-806 / ZM1) protein is 20.9 kDa protein.